A 378-amino-acid chain; its full sequence is Protein RecA (378 aa).

79–86 contributes to the ATP binding site; that stretch reads GPESSGKT.

It belongs to the RecA family.

It is found in the cytoplasm. Can catalyze the hydrolysis of ATP in the presence of single-stranded DNA, the ATP-dependent uptake of single-stranded DNA by duplex DNA, and the ATP-dependent hybridization of homologous single-stranded DNAs. It interacts with LexA causing its activation and leading to its autocatalytic cleavage. The protein is Protein RecA of Streptococcus equi subsp. zooepidemicus (strain MGCS10565).